Here is a 400-residue protein sequence, read N- to C-terminus: MSSKLVLVLNCGSSSLKFAIIDAVNGEEHLSGLAECFHLPEARLKWKMDGAKHEAALGAGAAHSEALNYIVNTILAQKPELSAQLTAIGHRIVHGGEKFTASAVINDEVLQGIKDSVPFAPLHNPAHLIGIAEALKSFPKLADKNVAVFDTAFHQTMPEESYLYALPYSLYRDHSVRRYGAHGTSHFYVTQEAAKALNKPVEEVNLITCHLGNGGSVTAVRNGKCVDTSMGLTPLEGLVMGTRSGDIDPAIIFHLHDSLGMSVDQINKMLTKESGLLGLTEVTSDCRYVEDNYESKADAKRAMDVFCHRLAKYIGAYSALMDGRLDAVIFTGGIGENAGMVRELTLNKLGLLGFEIDHERNMAARFGKSGAITKDGSRLALVIPTNEELVIAQDASRLTA.

Mg(2+) is bound at residue Asn-10. Residue Lys-17 coordinates ATP. Arg-91 serves as a coordination point for substrate. The Proton donor/acceptor role is filled by Asp-150. Residues 210–214 (HLGNG), 285–287 (DCR), and 333–337 (GIGEN) each bind ATP. Residue Glu-387 coordinates Mg(2+).

This sequence belongs to the acetokinase family. Homodimer. Mg(2+) is required as a cofactor. Requires Mn(2+) as cofactor.

The protein resides in the cytoplasm. The enzyme catalyses acetate + ATP = acetyl phosphate + ADP. It participates in metabolic intermediate biosynthesis; acetyl-CoA biosynthesis; acetyl-CoA from acetate: step 1/2. Catalyzes the formation of acetyl phosphate from acetate and ATP. Can also catalyze the reverse reaction. The protein is Acetate kinase of Serratia proteamaculans (strain 568).